The primary structure comprises 482 residues: 2-succinylbenzoate--CoA ligase (482 aa).

This sequence belongs to the ATP-dependent AMP-binding enzyme family. MenE subfamily.

The enzyme catalyses 2-succinylbenzoate + ATP + CoA = 2-succinylbenzoyl-CoA + AMP + diphosphate. It participates in quinol/quinone metabolism; 1,4-dihydroxy-2-naphthoate biosynthesis; 1,4-dihydroxy-2-naphthoate from chorismate: step 5/7. The protein operates within quinol/quinone metabolism; menaquinone biosynthesis. Functionally, converts 2-succinylbenzoate (OSB) to 2-succinylbenzoyl-CoA (OSB-CoA). The chain is 2-succinylbenzoate--CoA ligase from Bacillus cereus (strain ATCC 14579 / DSM 31 / CCUG 7414 / JCM 2152 / NBRC 15305 / NCIMB 9373 / NCTC 2599 / NRRL B-3711).